Reading from the N-terminus, the 297-residue chain is 4-hydroxy-tetrahydrodipicolinate synthase (297 aa).

Position 47 (Thr-47) interacts with pyruvate. Tyr-135 (proton donor/acceptor) is an active-site residue. Lys-163 (schiff-base intermediate with substrate) is an active-site residue. A pyruvate-binding site is contributed by Ile-205.

Belongs to the DapA family. Homotetramer; dimer of dimers.

The protein resides in the cytoplasm. It carries out the reaction L-aspartate 4-semialdehyde + pyruvate = (2S,4S)-4-hydroxy-2,3,4,5-tetrahydrodipicolinate + H2O + H(+). The protein operates within amino-acid biosynthesis; L-lysine biosynthesis via DAP pathway; (S)-tetrahydrodipicolinate from L-aspartate: step 3/4. Its function is as follows. Catalyzes the condensation of (S)-aspartate-beta-semialdehyde [(S)-ASA] and pyruvate to 4-hydroxy-tetrahydrodipicolinate (HTPA). The protein is 4-hydroxy-tetrahydrodipicolinate synthase of Dehalococcoides mccartyi (strain CBDB1).